We begin with the raw amino-acid sequence, 405 residues long: Imidazolonepropionase (405 aa).

2 residues coordinate Fe(3+): histidine 73 and histidine 75. Zn(2+) is bound by residues histidine 73 and histidine 75. Residues arginine 82, tyrosine 145, and histidine 178 each coordinate 4-imidazolone-5-propanoate. Residue tyrosine 145 participates in N-formimidoyl-L-glutamate binding. Histidine 243 serves as a coordination point for Fe(3+). Histidine 243 lines the Zn(2+) pocket. Position 246 (glutamine 246) interacts with 4-imidazolone-5-propanoate. Residue aspartate 318 coordinates Fe(3+). Residue aspartate 318 coordinates Zn(2+). The N-formimidoyl-L-glutamate site is built by asparagine 320 and glycine 322. Threonine 323 is a binding site for 4-imidazolone-5-propanoate.

Belongs to the metallo-dependent hydrolases superfamily. HutI family. Zn(2+) is required as a cofactor. Fe(3+) serves as cofactor.

It localises to the cytoplasm. It carries out the reaction 4-imidazolone-5-propanoate + H2O = N-formimidoyl-L-glutamate. It participates in amino-acid degradation; L-histidine degradation into L-glutamate; N-formimidoyl-L-glutamate from L-histidine: step 3/3. In terms of biological role, catalyzes the hydrolytic cleavage of the carbon-nitrogen bond in imidazolone-5-propanoate to yield N-formimidoyl-L-glutamate. It is the third step in the universal histidine degradation pathway. The sequence is that of Imidazolonepropionase from Brucella suis biovar 1 (strain 1330).